A 127-amino-acid polypeptide reads, in one-letter code: MIRTMMNAKIHRARVTESNLNYVGSITIDSDILEAVDILPNEKVAIVNNNNGARFETYVIAGERGSGKICLNGAASRLVEVGDVVIIMTYAQLNEEEIKHHAPKVAVMNEDNVIIEMIHEKENTIVL.

Residue serine 25 is the Schiff-base intermediate with substrate; via pyruvic acid of the active site. Serine 25 carries the pyruvic acid (Ser) modification. Threonine 57 is a substrate binding site. Tyrosine 58 functions as the Proton donor in the catalytic mechanism. 73-75 (GAA) lines the substrate pocket.

It belongs to the PanD family. As to quaternary structure, heterooctamer of four alpha and four beta subunits. Pyruvate serves as cofactor. Is synthesized initially as an inactive proenzyme, which is activated by self-cleavage at a specific serine bond to produce a beta-subunit with a hydroxyl group at its C-terminus and an alpha-subunit with a pyruvoyl group at its N-terminus.

Its subcellular location is the cytoplasm. The enzyme catalyses L-aspartate + H(+) = beta-alanine + CO2. Its pathway is cofactor biosynthesis; (R)-pantothenate biosynthesis; beta-alanine from L-aspartate: step 1/1. Functionally, catalyzes the pyruvoyl-dependent decarboxylation of aspartate to produce beta-alanine. This Staphylococcus aureus (strain bovine RF122 / ET3-1) protein is Aspartate 1-decarboxylase.